A 282-amino-acid polypeptide reads, in one-letter code: NADPH-dependent 7-cyano-7-deazaguanine reductase (282 aa).

Ile88–Ser90 contacts substrate. Ser90–Lys91 is an NADPH binding site. Cys190 acts as the Thioimide intermediate in catalysis. Asp197 functions as the Proton donor in the catalytic mechanism. Residue His229 to Glu230 participates in substrate binding. An NADPH-binding site is contributed by Arg258–Gly259.

The protein belongs to the GTP cyclohydrolase I family. QueF type 2 subfamily. As to quaternary structure, homodimer.

The protein resides in the cytoplasm. The enzyme catalyses 7-aminomethyl-7-carbaguanine + 2 NADP(+) = 7-cyano-7-deazaguanine + 2 NADPH + 3 H(+). Its pathway is tRNA modification; tRNA-queuosine biosynthesis. In terms of biological role, catalyzes the NADPH-dependent reduction of 7-cyano-7-deazaguanine (preQ0) to 7-aminomethyl-7-deazaguanine (preQ1). The chain is NADPH-dependent 7-cyano-7-deazaguanine reductase from Salmonella schwarzengrund (strain CVM19633).